The sequence spans 394 residues: Cell division protein FtsZ (394 aa).

Residues 21 to 25 (GGGNN), 108 to 110 (GTG), E139, R143, and D187 contribute to the GTP site. A disordered region spans residues 317 to 394 (DKPSSQGRKA…EERRSRRTRR (78 aa)). Composition is skewed to low complexity over residues 328–346 (STGF…SGAS) and 353–364 (SAHTSHSQSSES). Basic and acidic residues predominate over residues 365-388 (VNERSHTTKDDDIPSFIRNREERR).

The protein belongs to the FtsZ family. In terms of assembly, homodimer. Polymerizes to form a dynamic ring structure in a strictly GTP-dependent manner. Interacts directly with several other division proteins.

The protein resides in the cytoplasm. Functionally, essential cell division protein that forms a contractile ring structure (Z ring) at the future cell division site. The regulation of the ring assembly controls the timing and the location of cell division. One of the functions of the FtsZ ring is to recruit other cell division proteins to the septum to produce a new cell wall between the dividing cells. Binds GTP and shows GTPase activity. The chain is Cell division protein FtsZ from Staphylococcus epidermidis (strain ATCC 12228 / FDA PCI 1200).